The chain runs to 125 residues: MAMQAAKRANIRLPPEVNRILYIRNLPYKITAEEMYDIFGKYGPIRQIRVGNTPETRGTAYVVYEDIFDAKNACDHLSGFNVCNRYLVVLYYNANRAFQKMDTKKKEEQLKLLKEKYGINTDPPK.

Positions glutamate 16–lysine 29 are interaction with pre-mRNA branch site. Residues arginine 19–alanine 94 form the RRM domain. Lysine 29 is subject to N6-acetyllysine; alternate. Lysine 29 participates in a covalent cross-link: Glycyl lysine isopeptide (Lys-Gly) (interchain with G-Cter in SUMO2); alternate. Lysine 41 carries the N6-acetyllysine modification.

In terms of assembly, component of the 17S U2 SnRNP complex, a ribonucleoprotein complex that contains small nuclear RNA (snRNA) U2 and a number of specific proteins. Part of the SF3B subcomplex of the 17S U2 SnRNP complex. SF3B associates with the splicing subcomplex SF3A and a 12S RNA unit to form the U2 small nuclear ribonucleoproteins complex (U2 snRNP). Within the SF3B complex interacts directly with SF3B1. Component of the minor spliceosome, which splices U12-type introns.

The protein resides in the nucleus. In terms of biological role, component of the 17S U2 SnRNP complex of the spliceosome, a large ribonucleoprotein complex that removes introns from transcribed pre-mRNAs. The 17S U2 SnRNP complex (1) directly participates in early spliceosome assembly and (2) mediates recognition of the intron branch site during pre-mRNA splicing by promoting the selection of the pre-mRNA branch-site adenosine, the nucleophile for the first step of splicing. Within the 17S U2 SnRNP complex, SF3B6 is part of the SF3B subcomplex, which is required for 'A' complex assembly formed by the stable binding of U2 snRNP to the branchpoint sequence in pre-mRNA. Sequence independent binding of SF3A and SF3B subcomplexes upstream of the branch site is essential, it may anchor U2 snRNP to the pre-mRNA. Within the 17S U2 SnRNP complex, SF3B6 directly contacts the pre-mRNA branch site adenosine for the first catalytic step of splicing. SF3B6 stabilizes the intron branch site-U2 snRNA duplex, thereby promoting-binding of introns with poor sequence complementarity. Also acts as a component of the minor spliceosome, which is involved in the splicing of U12-type introns in pre-mRNAs. This Mus musculus (Mouse) protein is Splicing factor 3B subunit 6 (Sf3b6).